We begin with the raw amino-acid sequence, 119 residues long: Large ribosomal subunit protein uL18 (119 aa).

Belongs to the universal ribosomal protein uL18 family. As to quaternary structure, part of the 50S ribosomal subunit; part of the 5S rRNA/L5/L18/L25 subcomplex. Contacts the 5S and 23S rRNAs.

In terms of biological role, this is one of the proteins that bind and probably mediate the attachment of the 5S RNA into the large ribosomal subunit, where it forms part of the central protuberance. The chain is Large ribosomal subunit protein uL18 from Staphylococcus aureus (strain Mu3 / ATCC 700698).